The primary structure comprises 509 residues: MVWRQAKWDEPLIFELNNSGANRQGLLINKDDEIRSEIKEMKIPKNLLRENGPNLPSLSELEVVRHFIRLSQMNFGVDVGIMPLGSCTMKYNPKIEEKATAITESHHPLEDEDHVQGILEMIYELQNWFSEITGMDECSLQVPAGSAGEFAGVLMIKKYHEDHNRNYKDTMLVADTAHGTNPASAAMAGYKVMYVKSNGEGLVDMDILREIVNDKTAGFMLTNPNTLGLFEENILEISKIIHSANAILYYDGANLNGVLGIARPGDMGFDIVHLNLHKTFAVPHGGGGPGAGAICAKGELVNYLPYPMVEKVNGKYRLSKIPKNSVGKIATFYGNVGNLARSFAYLLGLGPQGVQMVGKMSTLATNYLIAKLRDIKELELIAPNRHRKHEVVFSVKQLMENYGVSANDVAKALLDSGFYAPTIYFPPIIEEALMIEPTETESKETLDMFAEALKKIVEDAKRNPEQLLKSPSNTSIARLDQAYANHPSTITPTYRVLKLRRMGKINYLK.

K278 is subject to N6-(pyridoxal phosphate)lysine.

The protein belongs to the GcvP family. C-terminal subunit subfamily. The glycine cleavage system is composed of four proteins: P, T, L and H. In this organism, the P 'protein' is a heterodimer of two subunits. It depends on pyridoxal 5'-phosphate as a cofactor.

It catalyses the reaction N(6)-[(R)-lipoyl]-L-lysyl-[glycine-cleavage complex H protein] + glycine + H(+) = N(6)-[(R)-S(8)-aminomethyldihydrolipoyl]-L-lysyl-[glycine-cleavage complex H protein] + CO2. In terms of biological role, the glycine cleavage system catalyzes the degradation of glycine. The P protein binds the alpha-amino group of glycine through its pyridoxal phosphate cofactor; CO(2) is released and the remaining methylamine moiety is then transferred to the lipoamide cofactor of the H protein. The polypeptide is Probable glycine dehydrogenase (decarboxylating) subunit 2 (Saccharolobus islandicus (strain Y.N.15.51 / Yellowstone #2) (Sulfolobus islandicus)).